A 68-amino-acid chain; its full sequence is Basic phospholipase A2 homolog BdipTx-I (68 aa).

Cysteines 28 and 44 form a disulfide.

The protein belongs to the phospholipase A2 family. Group II subfamily. K49 sub-subfamily. In terms of tissue distribution, expressed by the venom gland.

It is found in the secreted. Functionally, snake venom phospholipase A2 (PLA2) that lacks enzymatic activity. Is myotoxic, induces edema, and causes systemic effects (renal changes that lead to proteinuria) on mice. A model of myotoxic mechanism has been proposed: an apo Lys49-PLA2 is activated by the entrance of a hydrophobic molecule (e.g. fatty acid) at the hydrophobic channel of the protein leading to a reorientation of a monomer. This reorientation causes a transition between 'inactive' to 'active' states, causing alignment of C-terminal and membrane-docking sites (MDoS) side-by-side and putting the membrane-disruption sites (MDiS) in the same plane, exposed to solvent and in a symmetric position for both monomers. The MDoS region stabilizes the toxin on membrane by the interaction of charged residues with phospholipid head groups. Subsequently, the MDiS region destabilizes the membrane with penetration of hydrophobic residues. This insertion causes a disorganization of the membrane, allowing an uncontrolled influx of ions (i.e. calcium and sodium), and eventually triggering irreversible intracellular alterations and cell death. The sequence is that of Basic phospholipase A2 homolog BdipTx-I from Bothrops diporus (Chaco lancehead).